A 594-amino-acid chain; its full sequence is MSGRIEYIAGPVVKADLPGAKLYELVFVGEIKLFGEVVRVQGDKAFIQVYEDTTGLRPGEPVVRSGEPLSAWLGPTIIGKIYDGVQRPLKNIEEISKSPFIARGIGYDQAPPLDLKAEFDFKPAVKPGEEVSPGDVLGSVKETELMTHYILYPPLPENAPGVVEWVADGKYKVDDVIARIKTKRGIVEVKMWHKWPVRRPRPFREKLPPVEPLITGVRTIDTMFPIAKGGAAAVPGPFGSGKTVTIRTLSMFAQSRFIIPVLCGERGNEAADALHGLLKLKDPTTGRSLLERTTIIVNTSNMPVAAREASVYMGTTLGEYFRDQGYDVLVLADSTSRWAEAMREVALRIGEMPSEEGYPAYLPTRLAEFYERAGRVVLIGSKERVGSLTIAASVSPPGGDFTEPVTSNTLRFIGAFWPLSPRLAYSRHYPAIDWLAAFSRYVDTVEVWWSKNISTEWRRIRDTLQSLLVKEAELQEIVRILGTEALSEYEKHVLNVAFMIREGFLKQDAFNPVDTPSSPIKQFLLMKAIYAYYEEGMKAIEAGVPAAVLRELETVKRLPRLRMEVTNDVAKEELTKFIESLVSEIRSVLAARKQ.

236-243 (GPFGSGKT) lines the ATP pocket.

Belongs to the ATPase alpha/beta chains family. As to quaternary structure, has multiple subunits with at least A(3), B(3), C, D, E, F, H, I and proteolipid K(x).

The protein resides in the cell membrane. The enzyme catalyses ATP + H2O + 4 H(+)(in) = ADP + phosphate + 5 H(+)(out). Component of the A-type ATP synthase that produces ATP from ADP in the presence of a proton gradient across the membrane. The A chain is the catalytic subunit. The protein is A-type ATP synthase subunit A of Pyrobaculum neutrophilum (strain DSM 2338 / JCM 9278 / NBRC 100436 / V24Sta) (Thermoproteus neutrophilus).